The following is a 293-amino-acid chain: Acetylglutamate kinase (293 aa).

Substrate is bound by residues 68–69 (GG), Arg90, and Asn189.

This sequence belongs to the acetylglutamate kinase family. ArgB subfamily.

The protein resides in the cytoplasm. It carries out the reaction N-acetyl-L-glutamate + ATP = N-acetyl-L-glutamyl 5-phosphate + ADP. It functions in the pathway amino-acid biosynthesis; L-arginine biosynthesis; N(2)-acetyl-L-ornithine from L-glutamate: step 2/4. Its function is as follows. Catalyzes the ATP-dependent phosphorylation of N-acetyl-L-glutamate. The chain is Acetylglutamate kinase from Mycolicibacterium smegmatis (strain ATCC 700084 / mc(2)155) (Mycobacterium smegmatis).